The chain runs to 980 residues: SLIT and NTRK-like protein 3 (980 aa).

An N-terminal signal peptide occupies residues 1-27 (MMKPSIAEMLHRGRMLWIILLSTIALG). Residues 30–655 (TPIPLIEDSE…SPPGGPVPLS (626 aa)) lie on the Extracellular side of the membrane. N69 carries an N-linked (GlcNAc...) asparagine glycan. 6 LRR repeats span residues 79–100 (RPFK…SFLH), 103–124 (NAVS…AFNG), 127–148 (ILKR…TFLG), 151–172 (SLEY…AFRN), 175–196 (KLRV…LFKA), and 198–219 (SLTH…GMLD). The region spanning 233-284 (NPWNCTCEIVQLKSWLERIPYTALVGDITCETPFHFHGKDLREIKKTELCPL) is the LRRCT 1 domain. Residues 326 to 361 (EYKSSNKQPKPTKQPRTPRPPSTSQALYPGPNQPPI) are disordered. Residues 365–407 (QTRPPIPIICPTGCTCNLHINDLGLTVNCKERGFNNISELLPR) enclose the LRRNT domain. 6 LRR repeats span residues 410–431 (NAKK…DFWN), 434–455 (SLDL…AFIN), 458–479 (NLKS…MFRG), 482–503 (SLHY…AFSL), 506–527 (NLKL…AFAG), and 529–550 (SLAR…GVLE). The LRRCT 2 domain occupies 563–614 (NPWDCTCDLVPFKQWIETISSVSVVGDVLCRTPENLTHRDVRTIELEVLCPE). The N-linked (GlcNAc...) asparagine glycan is linked to N597. A disordered region spans residues 622–644 (GPSPPQPGDYHPNGGPTSASPYE). Residues 656-676 (VLILSLLVLFFSAVFVAAGLF) traverse the membrane as a helical segment. Residues 677 to 980 (AYVLRRRRKK…EVLEKTAYRF (304 aa)) are Cytoplasmic-facing. Disordered regions lie at residues 709–735 (LFED…EKAP) and 762–785 (EEEV…GTQP). The segment covering 715 to 725 (GNSGGSGGGGR) has biased composition (gly residues).

The protein belongs to the SLITRK family. Broadly expressed in embryonic brain with highest expression in cortical plate, pyramidal cell layer of the hippocampus, thalamus and hypothalamus.

It localises to the membrane. Functionally, suppresses neurite outgrowth. The chain is SLIT and NTRK-like protein 3 (Slitrk3) from Mus musculus (Mouse).